The chain runs to 912 residues: Isoleucine--tRNA ligase (912 aa).

The 'HIGH' region signature appears at 57-67; the sequence is PYANGDIHLGT. E549 is an L-isoleucyl-5'-AMP binding site. A 'KMSKS' region motif is present at residues 590–594; that stretch reads KMSKS. K593 contacts ATP. Zn(2+)-binding residues include C880, C883, C900, and C903.

It belongs to the class-I aminoacyl-tRNA synthetase family. IleS type 1 subfamily. Monomer. The cofactor is Zn(2+).

The protein resides in the cytoplasm. It carries out the reaction tRNA(Ile) + L-isoleucine + ATP = L-isoleucyl-tRNA(Ile) + AMP + diphosphate. Its function is as follows. Catalyzes the attachment of isoleucine to tRNA(Ile). As IleRS can inadvertently accommodate and process structurally similar amino acids such as valine, to avoid such errors it has two additional distinct tRNA(Ile)-dependent editing activities. One activity is designated as 'pretransfer' editing and involves the hydrolysis of activated Val-AMP. The other activity is designated 'posttransfer' editing and involves deacylation of mischarged Val-tRNA(Ile). In Fervidobacterium pennivorans (strain DSM 9078 / Ven5), this protein is Isoleucine--tRNA ligase.